Here is a 310-residue protein sequence, read N- to C-terminus: D-alanine--D-alanine ligase (310 aa).

The ATP-grasp domain maps to 107-302 (KQAFQAARLT…FEDLVERILA (196 aa)). Residue 135–188 (EFSLPVVVKPSQEGSSVGVSIVKKESEFAAAMKEAFRYDREILVEQFIKGSEVQ) participates in ATP binding. Positions 256, 269, and 271 each coordinate Mg(2+).

The protein belongs to the D-alanine--D-alanine ligase family. Requires Mg(2+) as cofactor. Mn(2+) is required as a cofactor.

Its subcellular location is the cytoplasm. The enzyme catalyses 2 D-alanine + ATP = D-alanyl-D-alanine + ADP + phosphate + H(+). The protein operates within cell wall biogenesis; peptidoglycan biosynthesis. Its function is as follows. Cell wall formation. This is D-alanine--D-alanine ligase from Geotalea uraniireducens (strain Rf4) (Geobacter uraniireducens).